The following is a 317-amino-acid chain: Acetyl-coenzyme A carboxylase carboxyl transferase subunit alpha (317 aa).

The 262-residue stretch at N33 to E294 folds into the CoA carboxyltransferase C-terminal domain.

It belongs to the AccA family. In terms of assembly, acetyl-CoA carboxylase is a heterohexamer composed of biotin carboxyl carrier protein (AccB), biotin carboxylase (AccC) and two subunits each of ACCase subunit alpha (AccA) and ACCase subunit beta (AccD).

It localises to the cytoplasm. It carries out the reaction N(6)-carboxybiotinyl-L-lysyl-[protein] + acetyl-CoA = N(6)-biotinyl-L-lysyl-[protein] + malonyl-CoA. The protein operates within lipid metabolism; malonyl-CoA biosynthesis; malonyl-CoA from acetyl-CoA: step 1/1. In terms of biological role, component of the acetyl coenzyme A carboxylase (ACC) complex. First, biotin carboxylase catalyzes the carboxylation of biotin on its carrier protein (BCCP) and then the CO(2) group is transferred by the carboxyltransferase to acetyl-CoA to form malonyl-CoA. The chain is Acetyl-coenzyme A carboxylase carboxyl transferase subunit alpha from Wigglesworthia glossinidia brevipalpis.